The following is a 464-amino-acid chain: MGKRLLDKLWERHVVVTNENGLDLLYIDLHLVHEVTSPQAFEGLRLANRTVRRPELTFATMDHNIPTKDVWNITDRIAKQQLDTLRDNCKQFKVRLADIGDEEQGIVHVIGPELGLTQPGKTIVCGDSHTATHGAFGALAFGIGTSEVEHVLATQTLWQRKPKAMGIELKGKLPKGVYAKDIILHLLSKYGVAVGTGHVMEFYGETIRDMGMEERMTLCNMAIEGGAKAGIIAPDEKTFSYVKGREYAPKDYETFTGKWSELYTDSDAIYDLHISVDVTDLAPYVTWGTNPSMGVPIDEKLPEKHNENDERAFSYMGLSPGQSTFEIPVKHVFIGSCTNSRLSDLEIAASVVKGKKVKEGVRALVVPGSKSVRERAMQKGLHRIFEEAGFEWREPGCSMCLGMNPDQVPEGEHCASTSNRNFEGRQGKGARTHLVSPAMAAAAALYGHFVDIRKESYDGTISYS.

[4Fe-4S] cluster is bound by residues Cys-337, Cys-397, and Cys-400.

It belongs to the aconitase/IPM isomerase family. LeuC type 1 subfamily. Heterodimer of LeuC and LeuD. [4Fe-4S] cluster is required as a cofactor.

The catalysed reaction is (2R,3S)-3-isopropylmalate = (2S)-2-isopropylmalate. The protein operates within amino-acid biosynthesis; L-leucine biosynthesis; L-leucine from 3-methyl-2-oxobutanoate: step 2/4. Functionally, catalyzes the isomerization between 2-isopropylmalate and 3-isopropylmalate, via the formation of 2-isopropylmaleate. The protein is 3-isopropylmalate dehydratase large subunit of Bacillus mycoides (strain KBAB4) (Bacillus weihenstephanensis).